Here is a 189-residue protein sequence, read N- to C-terminus: Large ribosomal subunit protein uL5 (189 aa).

The protein belongs to the universal ribosomal protein uL5 family. As to quaternary structure, part of the 50S ribosomal subunit; part of the 5S rRNA/L5/L18/L25 subcomplex. Contacts the 5S rRNA and the P site tRNA. Forms a bridge to the 30S subunit in the 70S ribosome.

Its function is as follows. This is one of the proteins that bind and probably mediate the attachment of the 5S RNA into the large ribosomal subunit, where it forms part of the central protuberance. In the 70S ribosome it contacts protein S13 of the 30S subunit (bridge B1b), connecting the 2 subunits; this bridge is implicated in subunit movement. Contacts the P site tRNA; the 5S rRNA and some of its associated proteins might help stabilize positioning of ribosome-bound tRNAs. The chain is Large ribosomal subunit protein uL5 from Parafrankia sp. (strain EAN1pec).